A 394-amino-acid polypeptide reads, in one-letter code: MDSSYLRISLSFLFWALLLSPAVSQSSSCSSQTFSGVKSYPHCLDLPDLKAILHYSYDASNTTLAVVFSAPPSKPGGWIAWAINPKSTGMAGSQALVASKDPSTGVASVTTLNIVSYSSLVPSKLSFDVWDVKAEEAANDGGALRIFAKVKVPADLAASGKVNQVWQVGPGVSNGRIQAHDFSGPNLNSVGSLDLTGTTPGVPVSGGGGAGNSRIHKRNIHGILNAVSWGLLFPIGAMIARYMRIFESADPAWFYLHVSCQFSAYVIGVAGWATGLKLGSESKGIQYNTHRNIGICLFSIATLQMFAMLLRPRKDHKFRFVWNIYHHGVGYSILILGIINVFKGLSILNPKHTYKTAYIAVIGTLGGITLLLEVVTWVIVLKRKSAKSTKPLKA.

The signal sequence occupies residues 1-24 (MDSSYLRISLSFLFWALLLSPAVS). Positions 49–169 (LKAILHYSYD…GKVNQVWQVG (121 aa)) constitute a DOMON domain. One can recognise a Cytochrome b561 domain in the interval 184–381 (GPNLNSVGSL…LEVVTWVIVL (198 aa)). 2 helical membrane-spanning segments follow: residues 220–240 (IHGI…AMIA) and 252–272 (AWFY…VAGW). The heme b site is built by histidine 221, histidine 257, and histidine 290. Residues 292–312 (NIGICLFSIATLQMFAMLLRP) form a helical membrane-spanning segment. Histidine 326 contributes to the heme b binding site. Helical transmembrane passes span 328–348 (GVGY…LSIL) and 361–381 (VIGT…VIVL).

Requires heme b as cofactor.

The protein localises to the membrane. In terms of biological role, may act as a catecholamine-responsive trans-membrane electron transporter. This Arabidopsis thaliana (Mouse-ear cress) protein is Cytochrome b561 and DOMON domain-containing protein At4g12980.